The chain runs to 645 residues: UPF0313 protein CLB_0243 (645 aa).

The Radical SAM core domain maps to 295–566 (AIKEVKFSIT…RMQRALLQFS (272 aa)). Cys-309, Cys-313, and Cys-316 together coordinate [4Fe-4S] cluster. The segment at 598-645 (NKPYKKSHKKNNAKNNNNHYNKNNNYNKNKDISKKNKKNSLSKHKKRK) is disordered. The segment covering 600–609 (PYKKSHKKNN) has biased composition (basic residues). Over residues 610-624 (AKNNNNHYNKNNNYN) the composition is skewed to low complexity. Basic residues predominate over residues 632 to 645 (KNKKNSLSKHKKRK).

It belongs to the UPF0313 family. Requires [4Fe-4S] cluster as cofactor.

The protein is UPF0313 protein CLB_0243 of Clostridium botulinum (strain ATCC 19397 / Type A).